We begin with the raw amino-acid sequence, 476 residues long: Bifunctional protein HldE (476 aa).

The tract at residues 1–318 (MLSKKPNILV…EYESSLHKSN (318 aa)) is ribokinase. 195–198 (NKKE) provides a ligand contact to ATP. The active site involves Asp263. Residues 345 to 476 (FTNGCFDILH…RIQENEKCNN (132 aa)) are cytidylyltransferase.

This sequence in the N-terminal section; belongs to the carbohydrate kinase PfkB family. In the C-terminal section; belongs to the cytidylyltransferase family. Homodimer.

The catalysed reaction is D-glycero-beta-D-manno-heptose 7-phosphate + ATP = D-glycero-beta-D-manno-heptose 1,7-bisphosphate + ADP + H(+). It catalyses the reaction D-glycero-beta-D-manno-heptose 1-phosphate + ATP + H(+) = ADP-D-glycero-beta-D-manno-heptose + diphosphate. It participates in nucleotide-sugar biosynthesis; ADP-L-glycero-beta-D-manno-heptose biosynthesis; ADP-L-glycero-beta-D-manno-heptose from D-glycero-beta-D-manno-heptose 7-phosphate: step 1/4. The protein operates within nucleotide-sugar biosynthesis; ADP-L-glycero-beta-D-manno-heptose biosynthesis; ADP-L-glycero-beta-D-manno-heptose from D-glycero-beta-D-manno-heptose 7-phosphate: step 3/4. Catalyzes the phosphorylation of D-glycero-D-manno-heptose 7-phosphate at the C-1 position to selectively form D-glycero-beta-D-manno-heptose-1,7-bisphosphate. Its function is as follows. Catalyzes the ADP transfer from ATP to D-glycero-beta-D-manno-heptose 1-phosphate, yielding ADP-D-glycero-beta-D-manno-heptose. In Aliarcobacter butzleri (strain RM4018) (Arcobacter butzleri), this protein is Bifunctional protein HldE.